Reading from the N-terminus, the 236-residue chain is Ribose-5-phosphate isomerase A (236 aa).

Residues 31-34 (TGST), 88-91 (DGAD), and 101-104 (KGGG) each bind substrate. The active-site Proton acceptor is glutamate 110. Lysine 128 is a binding site for substrate.

Belongs to the ribose 5-phosphate isomerase family. Homodimer.

It catalyses the reaction aldehydo-D-ribose 5-phosphate = D-ribulose 5-phosphate. It functions in the pathway carbohydrate degradation; pentose phosphate pathway; D-ribose 5-phosphate from D-ribulose 5-phosphate (non-oxidative stage): step 1/1. Functionally, catalyzes the reversible conversion of ribose-5-phosphate to ribulose 5-phosphate. The sequence is that of Ribose-5-phosphate isomerase A from Thermosynechococcus vestitus (strain NIES-2133 / IAM M-273 / BP-1).